The primary structure comprises 106 residues: uncharacterized protein (106 aa).

3 helical membrane passes run 5-27 (IFVI…GIII), 42-64 (AVAA…LAYM), and 76-98 (LPYI…TNFF).

It localises to the cell membrane. This is an uncharacterized protein from Archaeoglobus fulgidus (strain ATCC 49558 / DSM 4304 / JCM 9628 / NBRC 100126 / VC-16).